We begin with the raw amino-acid sequence, 582 residues long: Protein NARROW LEAF 1 (582 aa).

Disordered stretches follow at residues M1–Q26 and G531–K582. The span at L562–S572 shows a compositional bias: basic and acidic residues. The Nuclear localization signal signature appears at P567 to D573. The segment covering D573–K582 has biased composition (low complexity).

Expressed in leaf sheaths, leaf blades, culms and panicles. Preferentially expressed in vascular tissues in leaves and culms.

The protein localises to the nucleus. Its subcellular location is the nucleoplasm. It is found in the cytoplasm. Involved in the regulation of lateral leaf growth. May be involved in the regulation of basipetal polar auxin transport (PAT) and vascular patterning in leaves. Controls photosynthesis rate by regulating carboxylation efficiency and consequently photosynthesis rate. Controls panicle and spikelet numbers, and grain yield. This chain is Protein NARROW LEAF 1, found in Oryza sativa subsp. japonica (Rice).